The following is a 187-amino-acid chain: Ribosome-recycling factor (187 aa).

This sequence belongs to the RRF family.

The protein resides in the cytoplasm. Its function is as follows. Responsible for the release of ribosomes from messenger RNA at the termination of protein biosynthesis. May increase the efficiency of translation by recycling ribosomes from one round of translation to another. The protein is Ribosome-recycling factor of Nitrobacter winogradskyi (strain ATCC 25391 / DSM 10237 / CIP 104748 / NCIMB 11846 / Nb-255).